The chain runs to 314 residues: Homoserine kinase (314 aa).

95 to 105 (PHSRGLGSSAA) provides a ligand contact to ATP.

Belongs to the GHMP kinase family. Homoserine kinase subfamily.

The protein localises to the cytoplasm. The enzyme catalyses L-homoserine + ATP = O-phospho-L-homoserine + ADP + H(+). It functions in the pathway amino-acid biosynthesis; L-threonine biosynthesis; L-threonine from L-aspartate: step 4/5. In terms of biological role, catalyzes the ATP-dependent phosphorylation of L-homoserine to L-homoserine phosphate. This is Homoserine kinase from Mycobacterium sp. (strain KMS).